Here is a 60-residue protein sequence, read N- to C-terminus: Small ribosomal subunit protein bS21 (60 aa).

Positions 36–60 (QFFETPQEKHKRKEATRRRQRSRRR) are disordered. Basic residues predominate over residues 44–60 (KHKRKEATRRRQRSRRR).

Belongs to the bacterial ribosomal protein bS21 family.

This chain is Small ribosomal subunit protein bS21 (rpsU), found in Synechocystis sp. (strain ATCC 27184 / PCC 6803 / Kazusa).